The primary structure comprises 1482 residues: Cystic fibrosis transmembrane conductance regulator (1482 aa).

The Cytoplasmic portion of the chain corresponds to 1–77; sequence MQRSPLEKAS…KLINALRRCF (77 aa). A helical membrane pass occupies residues 78-98; that stretch reads FWRFMFYGILLYLGEVTKAVQ. The ABC transmembrane type-1 1 domain occupies 81 to 365; that stretch reads FMFYGILLYL…WAVQTWYDSL (285 aa). Residues 99 to 122 are Extracellular-facing; the sequence is PLLLGRIIASYDPDNKVERSIAIY. A helical transmembrane segment spans residues 123-146; sequence LGIGLCLLFIVRTLLLHPAIFGLH. Residues 147 to 195 are Cytoplasmic-facing; that stretch reads HIGMQMRIAMFSLIYKKILKLSSRVLDKISIGQLVSLLSNNLNKFDEGL. The helical transmembrane segment at 196 to 216 threads the bilayer; it reads ALAHFVWIAPLQVTLLMGLLW. The Extracellular portion of the chain corresponds to 217-222; that stretch reads ELLQAS. A helical membrane pass occupies residues 223–243; the sequence is AFCGLGFLIVLALVQAGLGRM. The Cytoplasmic portion of the chain corresponds to 244-298; it reads MMKYRDQRAGKINERLVITSEMIENIQSVKAYCWEEAMEKMIENLRQTELKLTRK. A helical membrane pass occupies residues 299-319; sequence AAYVRYFNSSAFFFSGFFVVF. The Extracellular segment spans residues 320–339; it reads LSVLPYALIKGIILRKIFTT. The helical transmembrane segment at 340 to 358 threads the bilayer; the sequence is ISFCIVLRMAVTRQFPWAV. The Cytoplasmic segment spans residues 359-859; that stretch reads QTWYDSLGAI…YLRYLAVNKS (501 aa). ATP-binding positions include Trp401, 458 to 465, and Gln493; that span reads GSTGAGKT. One can recognise an ABC transporter 1 domain in the interval 423 to 646; it reads NGDNSLFFSN…RPDFSSKLMG (224 aa). A lipid anchor (S-palmitoyl cysteine) is attached at Cys524. A phosphoserine mark is found at Ser549 and Ser660. The interval 654 to 832 is disordered R region; that stretch reads SAERRNSILT…EEINEEYLKE (179 aa). Residue Ser670 is modified to Phosphoserine; by PKA. Ser686 is subject to Phosphoserine. A Glycyl lysine isopeptide (Lys-Gly) (interchain with G-Cter in ubiquitin) cross-link involves residue Lys688. Ser700 and Ser712 each carry phosphoserine. A Phosphothreonine modification is found at Thr717. Phosphoserine occurs at positions 738, 769, 791, 796, and 814. Residues 860–880 traverse the membrane as a helical segment; that stretch reads LSLVLIWCLVIFLAEVAISLA. An ABC transmembrane type-1 2 domain is found at 860–1156; that stretch reads LSLVLIWCLV…AVNSSIDVDS (297 aa). At 881-919 the chain is on the extracellular side; sequence VLLLLDKSPRYSKGNGTASGNGSSAVIITSTSSYYLFYI. Asn895 and Asn901 each carry an N-linked (GlcNAc...) asparagine glycan. A discontinuously helical transmembrane segment spans residues 920 to 940; that stretch reads YVGVADTLLALGFFRGLPLVH. The Cytoplasmic portion of the chain corresponds to 941–991; the sequence is TLITVSKILHHRMLHSVLRAPMSTLNMLKAGGILNRFSKDIAILDDLLPLT. A helical membrane pass occupies residues 992–1012; it reads IFDFVQLLLIVIGAVAVVSVL. Residues 1013–1014 are Extracellular-facing; that stretch reads QP. Residues 1015 to 1035 form a helical membrane-spanning segment; sequence YIFLATVPVIAAFVILRGYFL. Topologically, residues 1036–1096 are cytoplasmic; sequence HTSQQLKQLE…TANWFLYLST (61 aa). A helical membrane pass occupies residues 1097–1117; the sequence is LRWFQMRIEMIFVVFFIAVTF. Over 1118-1131 the chain is Extracellular; it reads ISILTTGEGEGTVG. The helical transmembrane segment at 1132–1152 threads the bilayer; that stretch reads IILTLAMNIMGTLQWAVNSSI. Over 1153–1482 the chain is Cytoplasmic; that stretch reads DVDSLMRSVS…TEEEVQETRL (330 aa). The ABC transporter 2 domain occupies 1212 to 1445; the sequence is MTVKDLTARY…KSLFRQAISP (234 aa). ATP is bound by residues Tyr1221 and 1246–1253; that span reads GRTGAGKS. Residues 1388–1482 form an interaction with GORASP2 region; it reads RTLKQAFADC…TEEEVQETRL (95 aa). The S-palmitoyl cysteine moiety is linked to residue Cys1397. Phosphoserine is present on residues Ser1446 and Ser1458. A disordered region spans residues 1450–1482; that stretch reads KLFPRRNSSKHKSRSPITALKEETEEEVQETRL. Basic residues predominate over residues 1451-1463; that stretch reads LFPRRNSSKHKSR. Over residues 1472 to 1482 the composition is skewed to acidic residues; sequence ETEEEVQETRL. The PDZ-binding motif lies at 1480-1482; that stretch reads TRL.

It belongs to the ABC transporter superfamily. ABCC family. CFTR transporter (TC 3.A.1.202) subfamily. As to quaternary structure, monomer; does not require oligomerization for channel activity. May form oligomers in the membrane. Interacts with SLC26A3, SLC26A6 and NHERF1. Interacts with SHANK2. Interacts with MYO6. Interacts (via C-terminus) with GOPC (via PDZ domain); this promotes CFTR internalization and thereby decreases channel activity. Interacts with SLC4A7 through NHERF1. Found in a complex with MYO5B and RAB11A. Interacts with ANO1. Interacts with SLC26A8. Interacts with AHCYL1; the interaction increases CFTR activity. Interacts with CSE1L. The core-glycosylated form interacts with GORASP2 (via PDZ GRASP-type 1 domain) in respone to ER stress. Interacts with MARCHF2; the interaction leads to CFTR ubiqtuitination and degradation. Interacts with ADGRG2. Post-translationally, N-glycosylated. In terms of processing, phosphorylated; cAMP treatment promotes phosphorylation and activates the channel. Dephosphorylation decreases the ATPase activity (in vitro). Phosphorylation at PKA sites activates the channel. Phosphorylation at PKC sites enhances the response to phosphorylation by PKA. Phosphorylated by AMPK; this inhibits channel activity. Ubiquitinated, leading to its degradation in the lysosome. Deubiquitination by USP10 in early endosomes enhances its endocytic recycling to the cell membrane. Ubiquitinated by RNF185 during ER stress. Ubiquitinated by MARCHF2.

It localises to the apical cell membrane. Its subcellular location is the early endosome membrane. The protein resides in the cell membrane. It is found in the recycling endosome membrane. The protein localises to the endoplasmic reticulum membrane. It localises to the nucleus. It carries out the reaction ATP + H2O + closed Cl(-) channel = ADP + phosphate + open Cl(-) channel.. The catalysed reaction is chloride(in) = chloride(out). It catalyses the reaction hydrogencarbonate(in) = hydrogencarbonate(out). The enzyme catalyses ATP + H2O = ADP + phosphate + H(+). Functionally, epithelial ion channel that plays an important role in the regulation of epithelial ion and water transport and fluid homeostasis. Mediates the transport of chloride ions across the cell membrane. Possesses an intrinsic ATPase activity and utilizes ATP to gate its channel; the passive flow of anions through the channel is gated by cycles of ATP binding and hydrolysis by the ATP-binding domains. The ion channel is also permeable to HCO(3)(-); selectivity depends on the extracellular chloride concentration. Exerts its function also by modulating the activity of other ion channels and transporters. Contributes to the regulation of the pH and the ion content of the epithelial fluid layer. Modulates the activity of the epithelial sodium channel (ENaC) complex, in part by regulating the cell surface expression of the ENaC complex. May regulate bicarbonate secretion and salvage in epithelial cells by regulating the transporter SLC4A7. Can inhibit the chloride channel activity of ANO1. Plays a role in the chloride and bicarbonate homeostasis during sperm epididymal maturation and capacitation. This is Cystic fibrosis transmembrane conductance regulator from Otolemur garnettii (Small-eared galago).